The following is a 138-amino-acid chain: Transcription antitermination protein NusB (138 aa).

This sequence belongs to the NusB family.

Functionally, involved in transcription antitermination. Required for transcription of ribosomal RNA (rRNA) genes. Binds specifically to the boxA antiterminator sequence of the ribosomal RNA (rrn) operons. The sequence is that of Transcription antitermination protein NusB from Yersinia enterocolitica serotype O:8 / biotype 1B (strain NCTC 13174 / 8081).